The primary structure comprises 287 residues: 3-methyl-2-oxobutanoate hydroxymethyltransferase (287 aa).

A compositionally biased stretch (polar residues) spans 1 to 19; the sequence is MSTLPKTLTLDTSTSRANP. The interval 1-24 is disordered; sequence MSTLPKTLTLDTSTSRANPTPQPM. Mg(2+)-binding residues include aspartate 66 and aspartate 105. 3-methyl-2-oxobutanoate contacts are provided by residues 66-67, aspartate 105, and lysine 135; that span reads DS. Residue glutamate 137 participates in Mg(2+) binding. Residue glutamate 204 is the Proton acceptor of the active site.

This sequence belongs to the PanB family. In terms of assembly, homodecamer; pentamer of dimers. Requires Mg(2+) as cofactor.

Its subcellular location is the cytoplasm. The enzyme catalyses 3-methyl-2-oxobutanoate + (6R)-5,10-methylene-5,6,7,8-tetrahydrofolate + H2O = 2-dehydropantoate + (6S)-5,6,7,8-tetrahydrofolate. It functions in the pathway cofactor biosynthesis; (R)-pantothenate biosynthesis; (R)-pantoate from 3-methyl-2-oxobutanoate: step 1/2. Catalyzes the reversible reaction in which hydroxymethyl group from 5,10-methylenetetrahydrofolate is transferred onto alpha-ketoisovalerate to form ketopantoate. The protein is 3-methyl-2-oxobutanoate hydroxymethyltransferase of Sphingopyxis alaskensis (strain DSM 13593 / LMG 18877 / RB2256) (Sphingomonas alaskensis).